A 349-amino-acid polypeptide reads, in one-letter code: Flap endonuclease 1 (349 aa).

The segment at 1 to 98 is N-domain; sequence MDLADLVKDV…EELERRRKAK (98 aa). The Mg(2+) site is built by Asp-27, Asp-80, Glu-152, Glu-154, Asp-173, Asp-175, and Asp-236. The tract at residues 116-258 is I-domain; that stretch reads ELRKYSQAIL…RALKIIKKYG (143 aa). The tract at residues 341–349 is interaction with PCNA; that stretch reads RQTGLDRWF.

Belongs to the XPG/RAD2 endonuclease family. FEN1 subfamily. As to quaternary structure, interacts with PCNA via subunit PCNA1. The cofactor is Mg(2+).

Its activity is regulated as follows. Heterotrimeric PCNA stimulates the nuclease activity without altering cleavage specificity. Functionally, structure-specific nuclease with 5'-flap endonuclease and 5'-3' exonuclease activities involved in DNA replication and repair. During DNA replication, cleaves the 5'-overhanging flap structure that is generated by displacement synthesis when DNA polymerase encounters the 5'-end of a downstream Okazaki fragment. Binds the unpaired 3'-DNA end and kinks the DNA to facilitate 5' cleavage specificity. Cleaves one nucleotide into the double-stranded DNA from the junction in flap DNA, leaving a nick for ligation. Also involved in the base excision repair (BER) pathway. Acts as a genome stabilization factor that prevents flaps from equilibrating into structures that lead to duplications and deletions. Also possesses 5'-3' exonuclease activity on nicked or gapped double-stranded DNA. DNA polymerase I, DNA ligase and the flap endonuclease may be constitutively associated with the PCNA heterotrimer forming a scanning complex able to couple DNA synthesis and Okazaki fragment maturation. The polypeptide is Flap endonuclease 1 (Saccharolobus solfataricus (strain ATCC 35092 / DSM 1617 / JCM 11322 / P2) (Sulfolobus solfataricus)).